Reading from the N-terminus, the 305-residue chain is Plant-type L-asparaginase (305 aa).

Thr-175 (nucleophile) is an active-site residue. Substrate is bound by residues 202–205 and 224–227; these read RVGD and TGLG.

It belongs to the Ntn-hydrolase family. As to quaternary structure, heterotetramer of two alpha and two beta chains arranged as a dimer of alpha/beta heterodimers. Post-translationally, autocleaved. Generates the alpha and beta subunits. The N-terminal residue of the beta subunit is thought to be responsible for the nucleophile hydrolase activity.

The enzyme catalyses L-asparagine + H2O = L-aspartate + NH4(+). Catalyzes the hydrolysis of L-asparagine into L-aspartate and ammonia. This Pyrococcus horikoshii (strain ATCC 700860 / DSM 12428 / JCM 9974 / NBRC 100139 / OT-3) protein is Plant-type L-asparaginase.